Here is a 392-residue protein sequence, read N- to C-terminus: Phosphoglycerate kinase (392 aa).

Substrate is bound by residues 21–23 (DMN), R36, 59–62 (HLGR), R114, and R147. Residues K198, E320, and 346 to 349 (GGDT) each bind ATP.

It belongs to the phosphoglycerate kinase family. Monomer.

The protein localises to the cytoplasm. The enzyme catalyses (2R)-3-phosphoglycerate + ATP = (2R)-3-phospho-glyceroyl phosphate + ADP. It participates in carbohydrate degradation; glycolysis; pyruvate from D-glyceraldehyde 3-phosphate: step 2/5. The protein is Phosphoglycerate kinase of Neisseria meningitidis serogroup A / serotype 4A (strain DSM 15465 / Z2491).